A 356-amino-acid chain; its full sequence is Thymidine kinase (356 aa).

The segment at 1–29 is disordered; the sequence is MMDSRATYVPPKKISESNSNAEEDPTDCS. 61–68 is an ATP binding site; that stretch reads GCVGVGKT. Glu-86 functions as the Proton acceptor in the catalytic mechanism. Substrate is bound at residue Gln-122. Arg-208 lines the ATP pocket. Arg-214 contacts substrate.

Belongs to the herpesviridae thymidine kinase family. As to quaternary structure, homodimer.

It catalyses the reaction thymidine + ATP = dTMP + ADP + H(+). Its function is as follows. Catalyzes the transfer of the gamma-phospho group of ATP to thymidine to generate dTMP in the salvage pathway of pyrimidine synthesis. The dTMP serves as a substrate for DNA polymerase during viral DNA replication. Allows the virus to be reactivated and to grow in non-proliferative cells lacking a high concentration of phosphorylated nucleic acid precursors. This Elephas maximus (Indian elephant) protein is Thymidine kinase.